We begin with the raw amino-acid sequence, 386 residues long: Manganese dependent endoglucanase Eg5A (386 aa).

The N-terminal stretch at 1–17 (MLKYASIALALATLGVA) is a signal peptide. In terms of domain architecture, CBM1 spans 18-53 (QQQQWGQCGGIGWTGATTCVAGSVCSVLNPYYSQCI). Catalysis depends on E209, which acts as the Proton donor. E319 functions as the Nucleophile in the catalytic mechanism. N324 carries an N-linked (GlcNAc...) asparagine glycan.

This sequence belongs to the glycosyl hydrolase 5 (cellulase A) family. Mn(2+) serves as cofactor.

The protein localises to the secreted. It catalyses the reaction Endohydrolysis of (1-&gt;4)-beta-D-glucosidic linkages in cellulose, lichenin and cereal beta-D-glucans.. Functionally, secreted manganese dependent endoglucanase that acts by cleaving the beta-1,4-glucose linkage. Exhibits high activity toward carboxymethyl-cellulose (CMC), barley glucan, and glucomannan. Displays low activity on larminarin and xyloglucan but does not hydrolyze hemicellulose substrates such as birchwood xylan, arabinoxylan, and arabinan. This Phanerodontia chrysosporium (White-rot fungus) protein is Manganese dependent endoglucanase Eg5A.